The primary structure comprises 456 residues: Argininosuccinate lyase (456 aa).

The protein belongs to the lyase 1 family. Argininosuccinate lyase subfamily.

The protein localises to the cytoplasm. The enzyme catalyses 2-(N(omega)-L-arginino)succinate = fumarate + L-arginine. It participates in amino-acid biosynthesis; L-arginine biosynthesis; L-arginine from L-ornithine and carbamoyl phosphate: step 3/3. The chain is Argininosuccinate lyase from Listeria monocytogenes serotype 4b (strain F2365).